A 428-amino-acid chain; its full sequence is UPF0761 membrane protein TERTU_3006 (428 aa).

7 helical membrane-spanning segments follow: residues 47–67 (LFAL…IPAF), 104–124 (LSGV…RNIE), 143–163 (YLLY…AFLL), 189–209 (VVPW…VPNC), 218–238 (IGGV…GYIV), 248–268 (GAFA…TIIL), and 292–312 (MIVV…GESV).

It belongs to the UPF0761 family.

Its subcellular location is the cell inner membrane. The chain is UPF0761 membrane protein TERTU_3006 from Teredinibacter turnerae (strain ATCC 39867 / T7901).